The following is a 247-amino-acid chain: Probable transcriptional regulatory protein GAU_0635 (247 aa).

This sequence belongs to the TACO1 family.

Its subcellular location is the cytoplasm. The sequence is that of Probable transcriptional regulatory protein GAU_0635 from Gemmatimonas aurantiaca (strain DSM 14586 / JCM 11422 / NBRC 100505 / T-27).